Here is a 634-residue protein sequence, read N- to C-terminus: Chaperone protein HtpG (634 aa).

The tract at residues 1-344 (MSETVSHNKE…SNDLPLNVSR (344 aa)) is a; substrate-binding. Positions 345 to 561 (EILQDNKVTQ…DFEMGTQMAK (217 aa)) are b. Residues 562 to 634 (LLEAAGQAVP…GAINKLLTKV (73 aa)) form a c region.

The protein belongs to the heat shock protein 90 family. As to quaternary structure, homodimer.

The protein localises to the cytoplasm. Molecular chaperone. Has ATPase activity. This is Chaperone protein HtpG from Vibrio campbellii (strain ATCC BAA-1116).